Reading from the N-terminus, the 219-residue chain is MTDDTAAPPPRGPARDWKSSPLVSGLLLGLFSLVSALMLALASDATRGPIAARSAEDLLASLAQVLPAALHDNDPTADIRTLADADEGAVRVYVATRGGAVTAVTFELTGYGYGGAIRVLMAVAADGTILGARVLSHTETPGLGDKIEIGKDDWIEGFAGRSLTDPGPAGWKVRRDGGVFDQFSGATITPRAVVGTIHRGLTLFDRHRAELLAPLPLRS.

The chain crosses the membrane as a helical span at residues 25–45 (GLLLGLFSLVSALMLALASDA). FMN phosphoryl threonine is present on Thr-187.

The protein belongs to the RnfG family. In terms of assembly, the complex is composed of six subunits: RnfA, RnfB, RnfC, RnfD, RnfE and RnfG. It depends on FMN as a cofactor.

It is found in the cellular chromatophore membrane. Part of a membrane-bound complex that couples electron transfer with translocation of ions across the membrane. In Cereibacter sphaeroides (strain ATCC 17029 / ATH 2.4.9) (Rhodobacter sphaeroides), this protein is Ion-translocating oxidoreductase complex subunit G.